A 257-amino-acid polypeptide reads, in one-letter code: Membrane protein insertase YidC 1 (257 aa).

An N-terminal signal peptide occupies residues 1–20 (MYRKFGMAAMLVSILLLMTG). Cys21 carries the N-palmitoyl cysteine lipid modification. The S-diacylglycerol cysteine moiety is linked to residue Cys21. 5 consecutive transmembrane segments (helical) span residues 35 to 55 (IWDS…ANAF), 59 to 79 (FGLA…PLMI), 129 to 149 (LAGC…YHAI), 160 to 180 (FLWF…AGIT), and 205 to 225 (VMIL…WVIG).

The protein belongs to the OXA1/ALB3/YidC family. Type 2 subfamily.

It is found in the cell membrane. In terms of biological role, required for the insertion and/or proper folding and/or complex formation of integral membrane proteins into the membrane. Involved in integration of membrane proteins that insert both dependently and independently of the Sec translocase complex, as well as at least some lipoproteins. This is Membrane protein insertase YidC 1 from Halalkalibacterium halodurans (strain ATCC BAA-125 / DSM 18197 / FERM 7344 / JCM 9153 / C-125) (Bacillus halodurans).